The sequence spans 121 residues: MLPLTLLNATQGRPILVELKNGETFNGHLENCDNYMNLTLREVIRTMPDGDKFFRLPECYIRGNNIKYLRIQDEVLSQVAKQQAQQRENRGSRFRGRGQRGRGNYGHTAPNRRGRGRGGHM.

The Sm domain occupies 2 to 75; that stretch reads LPLTLLNATQ…IKYLRIQDEV (74 aa). Residues 82-121 form a disordered region; sequence QQAQQRENRGSRFRGRGQRGRGNYGHTAPNRRGRGRGGHM. Basic residues predominate over residues 110 to 121; that stretch reads PNRRGRGRGGHM.

This sequence belongs to the snRNP Sm proteins family. In terms of assembly, component of the heptameric LSM1-LSM7 complex that forms a seven-membered ring structure with a donut shape. The LSm subunits are arranged in the order lsm1, lsm2, lsm3, lsm6, lsm5, lsm7 and lsm4. Component of the heptameric LSM2-LSM8 complex that forms a seven-membered ring structure with a donut shape. The LSm subunits are arranged in the order lsm8, lsm2, lsm3, lsm6, lsm5, lsm7 and lsm4.

It localises to the nucleus. The protein localises to the cytoplasm. Functionally, component of LSm protein complexes, which are involved in RNA processing and may function in a chaperone-like manner. Component of the cytoplasmic LSM1-LSM7 complex which is involved in mRNA degradation by activating the decapping step. The LSM1-LSM7 complex loads onto the 3'-end of single stranded RNA. Component of the nuclear LSM2-LSM8 complex, which is involved in spliceosome assembly. The LSM2-LSM8 complex plays a role in the biogenesis of the spliceosomal U4/U6-U5 tri-snRNP complex by accelerating prp24-mediated annealing of U4/U6 di-snRNA. The LSM2-LSM8 complex binds U6 snRNA terminating with a cyclic 2',3' phosphate group; RNA with an unmodified 3' hydroxyl or non-cyclic 3' phosphate is bound less tightly. The protein is LSM complex subunit lsm4 (lsm4) of Schizosaccharomyces pombe (strain 972 / ATCC 24843) (Fission yeast).